Consider the following 936-residue polypeptide: Protocadherin gamma-A10 (936 aa).

The first 32 residues, 1–32 (MAAQRNRSKESKDCSGLVLLCLFFGIPWEAGA), serve as a signal peptide directing secretion. 6 Cadherin domains span residues 33 to 137 (RQIS…APKF), 138 to 246 (QAEN…APVF), 247 to 351 (TLPE…SPEL), 352 to 456 (TITS…PPTF), 457 to 566 (SQVS…APEI), and 574 to 687 (DGST…SPAN). The Extracellular segment spans residues 33–696 (RQISYSIPEE…NSETSDLTLY (664 aa)). A glycan (N-linked (GlcNAc...) asparagine) is linked at Asn51. N-linked (GlcNAc...) asparagine glycans are attached at residues Asn423 and Asn549. A helical membrane pass occupies residues 697–717 (LVVAVAAVSCVFLAFVIVLLA). At 718 to 936 (HRLRRWHKSR…KKKSGKKEKK (219 aa)) the chain is on the cytoplasmic side. Disordered regions lie at residues 806 to 845 (EDTP…WPNN) and 906 to 936 (ATLT…KEKK). Residues 820–845 (WRFSQAQRPGTSGSQNGDDTGTWPNN) show a composition bias toward polar residues. Basic residues predominate over residues 926–936 (NKKKSGKKEKK).

The protein resides in the cell membrane. Its function is as follows. Potential calcium-dependent cell-adhesion protein. May be involved in the establishment and maintenance of specific neuronal connections in the brain. This Homo sapiens (Human) protein is Protocadherin gamma-A10 (PCDHGA10).